The primary structure comprises 62 residues: Keratin-associated protein 8-1 (62 aa).

The 12 X 2 AA repeats of G-[YCGS] stretch occupies residues 12–53 (GCYWGSYGYPLGYSVGCGYGSTYSPVGYGFGYGYNGSGAFGC).

It belongs to the KRTAP type 8 family. Interacts with wool keratins. In terms of tissue distribution, wool.

Its function is as follows. In the wool cortex, wool keratin intermediate filaments are embedded in an interfilamentous matrix, consisting of hair keratin-associated proteins (KRTAP), which are essential for the formation of a rigid and resistant wool shaft through their extensive disulfide bond cross-linking with abundant cysteine residues of wool keratins. The matrix proteins include the high-sulfur and high-glycine-tyrosine keratins. In Ovis aries (Sheep), this protein is Keratin-associated protein 8-1 (KRTAP8-1).